The chain runs to 165 residues: NADPH-dependent 7-cyano-7-deazaguanine reductase (165 aa).

C56 (thioimide intermediate) is an active-site residue. D63 (proton donor) is an active-site residue. Substrate-binding positions include 78–80 (VES) and 97–98 (HE).

The protein belongs to the GTP cyclohydrolase I family. QueF type 1 subfamily.

The protein resides in the cytoplasm. The catalysed reaction is 7-aminomethyl-7-carbaguanine + 2 NADP(+) = 7-cyano-7-deazaguanine + 2 NADPH + 3 H(+). It participates in tRNA modification; tRNA-queuosine biosynthesis. Catalyzes the NADPH-dependent reduction of 7-cyano-7-deazaguanine (preQ0) to 7-aminomethyl-7-deazaguanine (preQ1). The sequence is that of NADPH-dependent 7-cyano-7-deazaguanine reductase from Bacillus cytotoxicus (strain DSM 22905 / CIP 110041 / 391-98 / NVH 391-98).